The primary structure comprises 449 residues: Phosphoglucosamine mutase (449 aa).

S101 acts as the Phosphoserine intermediate in catalysis. Residues S101, D242, D244, and D246 each coordinate Mg(2+). S101 bears the Phosphoserine mark.

The protein belongs to the phosphohexose mutase family. The cofactor is Mg(2+). Activated by phosphorylation.

The catalysed reaction is alpha-D-glucosamine 1-phosphate = D-glucosamine 6-phosphate. Catalyzes the conversion of glucosamine-6-phosphate to glucosamine-1-phosphate. The sequence is that of Phosphoglucosamine mutase from Methylocella silvestris (strain DSM 15510 / CIP 108128 / LMG 27833 / NCIMB 13906 / BL2).